We begin with the raw amino-acid sequence, 396 residues long: L-lactate dehydrogenase (396 aa).

The FMN hydroxy acid dehydrogenase domain occupies 1-380 (MIISAASDYR…TQDSLVQGLG (380 aa)). Substrate is bound at residue Y24. 2 residues coordinate FMN: S106 and Q127. Residue Y129 participates in substrate binding. An FMN-binding site is contributed by T155. R164 contributes to the substrate binding site. K251 contacts FMN. The Proton acceptor role is filled by H275. Residue R278 participates in substrate binding. 306–330 (DSGIRNGLDVVRMIALGADTVLLGR) lines the FMN pocket.

The protein belongs to the FMN-dependent alpha-hydroxy acid dehydrogenase family. Requires FMN as cofactor.

The protein localises to the cell inner membrane. The catalysed reaction is (S)-lactate + A = pyruvate + AH2. In terms of biological role, catalyzes the conversion of L-lactate to pyruvate. Is coupled to the respiratory chain. This chain is L-lactate dehydrogenase, found in Shigella boydii serotype 4 (strain Sb227).